The sequence spans 371 residues: Aromatic peroxygenase (371 aa).

Positions M1–A18 are cleaved as a signal peptide. The propeptide occupies F19–R43. N-linked (GlcNAc...) asparagine glycosylation is present at N54. C79 is a binding site for heme. N-linked (GlcNAc...) asparagine glycosylation is found at N184, N204, N225, and N329. An intrachain disulfide couples C321 to C362.

It belongs to the chloroperoxidase family. The cofactor is heme b. In terms of processing, N-glycosylated.

It catalyses the reaction RH + H2O2 = ROH + H2O.. In terms of biological role, aromatic peroxidase that oxidizes aryl alcohols into the corresponding aldehydes and then into the corresponding benzoic acids. Oxidizes toluene and naphthalene. Catalyzes the regioselective peroxide-dependent hydroxylation of propranolol and diclofenac to 5-hydroxypropranolol and 4'-hydroxydiclofenac. Catalyzes the regioselective peroxide-dependent hydroxylation of naphthalene to 1-naphthol or 2-naphthol via a naphthalene 1,2-oxide intermediate. Catalyzes the regioselective peroxide-dependent oxidation of pyridine to pyridine N-oxide. Halogenates monochlorodimedone and phenol. Oxidizes the sulfur-containing heterocycle dibenzothiophene to yield ring-hydroxylation products and to a lesser extent sulfoxidation products. This is Aromatic peroxygenase from Cyclocybe aegerita (Black poplar mushroom).